The chain runs to 198 residues: MILITSLAVLVSYLIGSIPAAAWVARRRGVDIRKVGSGNSGATNVLRSLGKGPALLVAAFDILKGAIAVGLARALGLDPAWTALCGVAAVLGHNFSPFLGFRGGKGVATSFGTMLALDPVVGGGAFVVGVGCIWLTRFVSAGSILGALTAVTLAAALARPGWLLLIVAFLAALLTWQHRDNIRRLQAGNERRLGEKKD.

Transmembrane regions (helical) follow at residues 1–21 (MILI…IPAA), 52–72 (GPAL…VGLA), 81–101 (WTAL…FLGF), 115–135 (LALD…CIWL), and 153–173 (LAAA…LAAL).

Belongs to the PlsY family. Probably interacts with PlsX.

It is found in the cell membrane. The enzyme catalyses an acyl phosphate + sn-glycerol 3-phosphate = a 1-acyl-sn-glycero-3-phosphate + phosphate. It participates in lipid metabolism; phospholipid metabolism. Functionally, catalyzes the transfer of an acyl group from acyl-phosphate (acyl-PO(4)) to glycerol-3-phosphate (G3P) to form lysophosphatidic acid (LPA). This enzyme utilizes acyl-phosphate as fatty acyl donor, but not acyl-CoA or acyl-ACP. This Deinococcus geothermalis (strain DSM 11300 / CIP 105573 / AG-3a) protein is Glycerol-3-phosphate acyltransferase.